Reading from the N-terminus, the 391-residue chain is Casein kinase II subunit alpha (391 aa).

An interaction with beta subunit region spans residues Gln-36–Leu-41. One can recognise a Protein kinase domain in the interval Tyr-39–Phe-324. Residues Leu-45–Val-53 and Lys-68 each bind ATP. The active-site Proton acceptor is Asp-156. Positions Gly-335–Val-346 are enriched in polar residues. Residues Gly-335–Pro-363 are disordered. Low complexity predominate over residues Ser-347–Ser-357.

Belongs to the protein kinase superfamily. Ser/Thr protein kinase family. CK2 subfamily. Tetramer composed of an alpha chain, an alpha' and two beta chains. Interacts with RNPS1.

It is found in the nucleus. It catalyses the reaction L-seryl-[protein] + ATP = O-phospho-L-seryl-[protein] + ADP + H(+). It carries out the reaction L-threonyl-[protein] + ATP = O-phospho-L-threonyl-[protein] + ADP + H(+). Functionally, catalytic subunit of a constitutively active serine/threonine-protein kinase complex that phosphorylates a large number of substrates containing acidic residues C-terminal to the phosphorylated serine or threonine. Regulates numerous cellular processes, such as cell cycle progression, apoptosis and transcription, as well as viral infection. May act as a regulatory node which integrates and coordinates numerous signals leading to an appropriate cellular response. During mitosis, functions as a component of the p53/TP53-dependent spindle assembly checkpoint (SAC) that maintains cyclin-B-CDK1 activity and G2 arrest in response to spindle damage. Can also negatively regulate apoptosis. Phosphorylates the caspases CASP9 and CASP2 and the apoptotic regulator NOL3. Phosphorylation protects CASP9 from cleavage and activation by CASP8, and inhibits the dimerization of CASP2 and activation of CASP8. Plays an important role in the circadian clock function by phosphorylating BMAL1. This Gallus gallus (Chicken) protein is Casein kinase II subunit alpha (CSNK2A1).